Reading from the N-terminus, the 38-residue chain is U9-ctenitoxin-Pk1a (38 aa).

4 cysteine pairs are disulfide-bonded: Cys2/Cys17, Cys9/Cys22, Cys16/Cys36, and Cys24/Cys34.

Expressed by the venom gland.

It is found in the secreted. The polypeptide is U9-ctenitoxin-Pk1a (Phoneutria keyserlingi (Brazilian wandering spider)).